Consider the following 206-residue polypeptide: Small ribosomal subunit protein uS4 (206 aa).

Positions 98–161 (RRLDNVVYRL…RSMELIKNNL (64 aa)) constitute an S4 RNA-binding domain.

The protein belongs to the universal ribosomal protein uS4 family. Part of the 30S ribosomal subunit. Contacts protein S5. The interaction surface between S4 and S5 is involved in control of translational fidelity.

Its function is as follows. One of the primary rRNA binding proteins, it binds directly to 16S rRNA where it nucleates assembly of the body of the 30S subunit. In terms of biological role, with S5 and S12 plays an important role in translational accuracy. In Caldanaerobacter subterraneus subsp. tengcongensis (strain DSM 15242 / JCM 11007 / NBRC 100824 / MB4) (Thermoanaerobacter tengcongensis), this protein is Small ribosomal subunit protein uS4.